Consider the following 155-residue polypeptide: Peptide deformylase (155 aa).

Cys-88 and His-130 together coordinate Fe cation. Residue Glu-131 is part of the active site. His-134 contributes to the Fe cation binding site.

The protein belongs to the polypeptide deformylase family. The cofactor is Fe(2+).

It catalyses the reaction N-terminal N-formyl-L-methionyl-[peptide] + H2O = N-terminal L-methionyl-[peptide] + formate. Removes the formyl group from the N-terminal Met of newly synthesized proteins. Requires at least a dipeptide for an efficient rate of reaction. N-terminal L-methionine is a prerequisite for activity but the enzyme has broad specificity at other positions. This chain is Peptide deformylase, found in Pelotomaculum thermopropionicum (strain DSM 13744 / JCM 10971 / SI).